The following is a 132-amino-acid chain: Interleukin-5 (132 aa).

Positions 1–19 are cleaved as a signal peptide; that stretch reads MRMLLCLNVLTLSCVWAIA. N45, N74, and N88 each carry an N-linked (GlcNAc...) asparagine glycan.

The protein belongs to the IL-5 family. Homodimer; disulfide-linked. Interacts with IL5RA. Interacts with CSF2RB.

The protein localises to the secreted. Its function is as follows. Homodimeric cytokine expressed predominantly by T-lymphocytes and NK cells that plays an important role in the survival, differentiation, and chemotaxis of eosinophils. Acts also on activated and resting B-cells to induce immunoglobulin production, growth, and differentiation. Mechanistically, exerts its biological effects through a receptor composed of IL5RA subunit and the cytokine receptor common subunit beta/CSF2RB. Binding to the receptor leads to activation of various kinases including LYN, SYK and JAK2 and thereby propagates signals through the RAS-MAPK and JAK-STAT5 pathways respectively. This Rattus norvegicus (Rat) protein is Interleukin-5 (Il5).